Here is a 149-residue protein sequence, read N- to C-terminus: 3-dehydroquinate dehydratase (149 aa).

Tyr-21 acts as the Proton acceptor in catalysis. Residues Asn-73, His-79, and Asp-86 each contribute to the substrate site. His-99 acts as the Proton donor in catalysis. Residues 100-101 (LT) and Arg-110 each bind substrate.

This sequence belongs to the type-II 3-dehydroquinase family. Homododecamer.

It catalyses the reaction 3-dehydroquinate = 3-dehydroshikimate + H2O. It functions in the pathway metabolic intermediate biosynthesis; chorismate biosynthesis; chorismate from D-erythrose 4-phosphate and phosphoenolpyruvate: step 3/7. Catalyzes a trans-dehydration via an enolate intermediate. In Thermus thermophilus (strain ATCC BAA-163 / DSM 7039 / HB27), this protein is 3-dehydroquinate dehydratase.